We begin with the raw amino-acid sequence, 224 residues long: UPF0758 protein Tola_0183 (224 aa).

The MPN domain occupies 102 to 224; it reads SLTSPQLVRR…PVSFAERGWL (123 aa). His173, His175, and Asp186 together coordinate Zn(2+). Residues 173 to 186 carry the JAMM motif motif; that stretch reads HNHPSGVAEPSHAD.

The protein belongs to the UPF0758 family.

In Tolumonas auensis (strain DSM 9187 / NBRC 110442 / TA 4), this protein is UPF0758 protein Tola_0183.